The sequence spans 239 residues: DNA repair protein RecO (239 aa).

Belongs to the RecO family.

Involved in DNA repair and RecF pathway recombination. The sequence is that of DNA repair protein RecO from Cereibacter sphaeroides (strain KD131 / KCTC 12085) (Rhodobacter sphaeroides).